The primary structure comprises 447 residues: Asparagine--tRNA ligase (447 aa).

Belongs to the class-II aminoacyl-tRNA synthetase family. Homodimer.

The protein localises to the cytoplasm. The enzyme catalyses tRNA(Asn) + L-asparagine + ATP = L-asparaginyl-tRNA(Asn) + AMP + diphosphate + H(+). The polypeptide is Asparagine--tRNA ligase (Herpetosiphon aurantiacus (strain ATCC 23779 / DSM 785 / 114-95)).